Here is a 267-residue protein sequence, read N- to C-terminus: 5'-nucleotidase SurE (267 aa).

Positions 14, 15, 45, and 100 each coordinate a divalent metal cation.

This sequence belongs to the SurE nucleotidase family. The cofactor is a divalent metal cation.

It is found in the cytoplasm. The enzyme catalyses a ribonucleoside 5'-phosphate + H2O = a ribonucleoside + phosphate. Nucleotidase that shows phosphatase activity on nucleoside 5'-monophosphates. The sequence is that of 5'-nucleotidase SurE from Methanosarcina mazei (strain ATCC BAA-159 / DSM 3647 / Goe1 / Go1 / JCM 11833 / OCM 88) (Methanosarcina frisia).